A 512-amino-acid polypeptide reads, in one-letter code: N-fatty-acyl-amino acid synthase/hydrolase PM20D1 (512 aa).

The signal sequence occupies residues 1–34 (MAVSRWKAVGSTLLAAFLVGLVVLIAVLLIRTYT). Residues asparagine 45 and asparagine 81 are each glycosylated (N-linked (GlcNAc...) asparagine). Histidine 134 is a Zn(2+) binding site. Aspartate 136 is an active-site residue. A Zn(2+)-binding site is contributed by aspartate 166. The active-site Proton acceptor is the glutamate 200. Zn(2+)-binding residues include glutamate 201 and aspartate 227. N-linked (GlcNAc...) asparagine glycosylation occurs at asparagine 450. Histidine 472 is a Zn(2+) binding site.

This sequence belongs to the peptidase M20A family.

It localises to the secreted. It carries out the reaction an N-acyl-L-amino acid + H2O = an L-alpha-amino acid + a carboxylate. It catalyses the reaction an N-acyl-aromatic L-alpha-amino acid + H2O = an aromatic L-alpha-amino acid + a carboxylate. The catalysed reaction is N-(5Z,8Z,11Z,14Z)-eicosatetraenoyl-glycine + H2O = (5Z,8Z,11Z,14Z)-eicosatetraenoate + glycine. The enzyme catalyses N-hexadecanoyl-L-phenylalanine + H2O = hexadecanoate + L-phenylalanine. It carries out the reaction N-octadecanoyl-L-phenylalanine + H2O = octadecanoate + L-phenylalanine. It catalyses the reaction N-(4Z,7Z,10Z,13Z,16Z,19Z-docosahexaenoyl)-L-phenylalanine + H2O = (4Z,7Z,10Z,13Z,16Z,19Z)-docosahexaenoate + L-phenylalanine. The catalysed reaction is N-(9Z-octadecenoyl)-L-asparagine + H2O = L-asparagine + (9Z)-octadecenoate. The enzyme catalyses (9Z)-octadecenoate + glycine = N-(9Z-octadecenoyl)glycine + H2O. It carries out the reaction N-(9Z-octadecenoyl)-L-lysine + H2O = L-lysine + (9Z)-octadecenoate. It catalyses the reaction N-(9Z-octadecenoyl)-L-methionine + H2O = (9Z)-octadecenoate + L-methionine. The catalysed reaction is N-(9Z-octadecenoyl)-L-serine + H2O = L-serine + (9Z)-octadecenoate. The enzyme catalyses N-(9Z-octadecenoyl)-L-tryptophan + H2O = L-tryptophan + (9Z)-octadecenoate. It carries out the reaction N-(9Z-octadecenoyl)-L-tyrosine + H2O = L-tyrosine + (9Z)-octadecenoate. It catalyses the reaction N-(9Z-octadecenoyl)-L-glutamine + H2O = L-glutamine + (9Z)-octadecenoate. The catalysed reaction is N-(5Z,8Z,11Z,14Z-eicosatetraenoyl)-L-serine + H2O = (5Z,8Z,11Z,14Z)-eicosatetraenoate + L-serine. The enzyme catalyses (5Z,8Z,11Z,14Z)-eicosatetraenoate + L-phenylalanine = N-(5Z,8Z,11Z,14Z-eicosatetraenoyl)-L-phenylalanine + H2O. It carries out the reaction N-(9Z-octadecenoyl)-L-leucine + H2O = L-leucine + (9Z)-octadecenoate. It catalyses the reaction L-phenylalanine + (9Z)-octadecenoate = N-(9Z-octadecenoyl)-L-phenylalanine + H2O. It participates in amino-acid metabolism. The protein operates within energy metabolism; electron transfer. Its pathway is lipid metabolism; fatty acid metabolism. Lipoproteins are powerful coactivators of PM20D1 activity in vitro and NAA biosynthesis in vivo. In terms of biological role, secreted enzyme that regulates the endogenous N-fatty acyl amino acid (NAAs) tissue and circulating levels by functioning as a bidirectional NAA synthase/hydrolase. It condenses free fatty acids and free amino acids to generate NAAs and bidirectionally catalyzes the reverse hydrolysis reaction. Some of these NAAs stimulate oxidative metabolism via mitochondrial uncoupling, increasing energy expenditure in a UPC1-independent manner. Thereby, this secreted protein may indirectly regulate whole body energy expenditure. PM20D1 circulates in tight association with both low- and high-density (LDL and HDL,respectively) lipoprotein particles. This chain is N-fatty-acyl-amino acid synthase/hydrolase PM20D1, found in Xenopus tropicalis (Western clawed frog).